The following is a 201-amino-acid chain: Recombination protein RecR (201 aa).

Residues 57–72 (CKYCANFTNKDECDIC) form a C4-type zinc finger. Residues 80–176 (TKLMIVTTNE…QIYRIGFGIP (97 aa)) form the Toprim domain.

This sequence belongs to the RecR family.

In terms of biological role, may play a role in DNA repair. It seems to be involved in an RecBC-independent recombinational process of DNA repair. It may act with RecF and RecO. In Ureaplasma parvum serovar 3 (strain ATCC 27815 / 27 / NCTC 11736), this protein is Recombination protein RecR.